Consider the following 227-residue polypeptide: Cysteine-rich hydrophobic domain-containing protein 1 (227 aa).

The disordered stretch occupies residues 1–84 (MSILLPNMAE…PPRVVSEEHL (84 aa)). Residues 13 to 23 (TISELEEEEEA) are compositionally biased toward acidic residues. Over residues 24-44 (ATSSSSPSSSPSSSSSSSVSG) the composition is skewed to low complexity. Residues 45–72 (PDEDEEDEEEEEEEDEEEEDEEEEEEEV) show a composition bias toward acidic residues. Residues 46-73 (DEDEEDEEEEEEEDEEEEDEEEEEEEVP) adopt a coiled-coil conformation.

The protein belongs to the CHIC family. Palmitoylated. As to expression, expressed moderately in the brain.

It localises to the cell membrane. The protein resides in the cytoplasmic vesicle. The sequence is that of Cysteine-rich hydrophobic domain-containing protein 1 (Chic1) from Mus musculus (Mouse).